A 344-amino-acid polypeptide reads, in one-letter code: Sorting nexin-16 (344 aa).

Residues 1-10 (MATPYVPVPM) show a composition bias toward pro residues. Disordered regions lie at residues 1 to 66 (MATP…NTSS) and 81 to 107 (ASSI…EDRP). Residues 14–26 (NSASSFTTNRNQR) show a composition bias toward polar residues. Over residues 27–40 (SSSFGSVSTSSNSS) the composition is skewed to low complexity. Residues 41 to 66 (KGQLEDSNMGNFKQTSVPDQMDNTSS) show a composition bias toward polar residues. Positions 105-218 (DRPSTPTILG…EFLCLDDPPG (114 aa)) constitute a PX domain. Residues R144, T146, and R184 each contribute to the a 1,2-diacyl-sn-glycero-3-phospho-(1D-myo-inositol-3-phosphate) site. Position 222 is a phosphoserine (S222). Residues 223-278 (LEESRAFCETLEETNYRLQKELLEKQKEMESLKKLLSEKQLHIDTLENRIRTLSLE) adopt a coiled-coil conformation.

The protein belongs to the sorting nexin family. In terms of assembly, homooligomer. Interacts with EGFR. Detected in placenta, lung, liver,heart and pancreas.

Its subcellular location is the early endosome membrane. It localises to the late endosome membrane. The protein resides in the cytoplasm. It is found in the lysosome. In terms of biological role, may be involved in several stages of intracellular trafficking. Plays a role in protein transport from early to late endosomes. Plays a role in protein transport to the lysosome. Promotes degradation of EGFR after EGF signaling. Plays a role in intracellular transport of vesicular stomatitis virus nucleocapsids from the endosome to the cytoplasm. The polypeptide is Sorting nexin-16 (SNX16) (Homo sapiens (Human)).